We begin with the raw amino-acid sequence, 685 residues long: Eukaryotic peptide chain release factor GTP-binding subunit (685 aa).

Disordered regions lie at residues 1 to 34 (MSDS…GYQA), 63 to 99 (YNPD…GGRG), and 112 to 234 (GYQA…NVTS). An N-acetylserine modification is found at Ser-2. Residues 2-239 (SDSNQGNNQQ…ANVTSADALI (238 aa)) are interaction with PAB1. The segment at 5 to 135 (NQGNNQQNYQ…LNDFQKQQKQ (131 aa)) is prion domain (PrD). The span at 117–129 (FQPQSQGMSLNDF) shows a compositional bias: polar residues. Residues 139–249 (KPKKTLKLVS…KEQEEEVDDE (111 aa)) are charged. Residues 166–222 (AESDKKEEEKSAETKEPTKEPTKVEEPVKKEEKPVQTEEKTEEKSELPKVEDLKISE) show a composition bias toward basic and acidic residues. Residues 223-234 (STHNTNNANVTS) show a composition bias toward polar residues. In terms of domain architecture, tr-type G spans 258 to 484 (KDHVSLIFMG…YLDTMNHVDR (227 aa)). The interval 267 to 274 (GHVDAGKS) is G1. 267-274 (GHVDAGKS) is a GTP binding site. The G2 stretch occupies residues 323–327 (GKTIE). Residues 344-347 (DAPG) form a G3 region. GTP contacts are provided by residues 406 to 409 (NKMD) and 449 to 450 (GY). The tract at residues 406–409 (NKMD) is G4. Residues 448-450 (SGY) form a G5 region. Ser-571 bears the Phosphoserine mark.

This sequence belongs to the TRAFAC class translation factor GTPase superfamily. Classic translation factor GTPase family. ERF3 subfamily. Heterodimer of two subunits, one of which binds GTP. Interacts with polyadenylate-binding protein PAB1, and TPA1.

It localises to the cytoplasm. The enzyme catalyses GTP + H2O = GDP + phosphate + H(+). In terms of biological role, GTPase component of the eRF1-eRF3-GTP ternary complex, a ternary complex that mediates translation termination in response to the termination codons UAA, UAG and UGA. SUP35/eRF3 mediates SUP45/eRF1 delivery to stop codons: The eRF1-eRF3-GTP complex binds to a stop codon in the ribosomal A-site. GTP hydrolysis by SUP35/eRF3 induces a conformational change that leads to its dissociation, permitting SUP45/eRF1 to accommodate fully in the A-site. Recruited by polyadenylate-binding protein PAB1 to poly(A)-tails of mRNAs. Interaction with PAB1 is also required for regulation of normal mRNA decay through translation termination-coupled poly(A) shortening. The polypeptide is Eukaryotic peptide chain release factor GTP-binding subunit (SUP35) (Saccharomyces cerevisiae (strain ATCC 204508 / S288c) (Baker's yeast)).